The following is a 399-amino-acid chain: Elongation factor Tu (399 aa).

The tr-type G domain occupies 10–209 (KPHVNIGTIG…EVDRYIPTPE (200 aa)). Residues 19-26 (GHVDHGKT) are G1. 19-26 (GHVDHGKT) is a GTP binding site. A Mg(2+)-binding site is contributed by Thr26. Positions 60 to 64 (GITIA) are G2. Residues 81–84 (DCPG) form a G3 region. GTP is bound by residues 81-85 (DCPGH) and 136-139 (NKED). The segment at 136–139 (NKED) is G4. Residues 174-176 (SAL) are G5.

Belongs to the TRAFAC class translation factor GTPase superfamily. Classic translation factor GTPase family. EF-Tu/EF-1A subfamily. Monomer.

It localises to the cytoplasm. The enzyme catalyses GTP + H2O = GDP + phosphate + H(+). In terms of biological role, GTP hydrolase that promotes the GTP-dependent binding of aminoacyl-tRNA to the A-site of ribosomes during protein biosynthesis. The polypeptide is Elongation factor Tu (Wolinella succinogenes (strain ATCC 29543 / DSM 1740 / CCUG 13145 / JCM 31913 / LMG 7466 / NCTC 11488 / FDC 602W) (Vibrio succinogenes)).